The chain runs to 143 residues: D-aminoacyl-tRNA deacylase (143 aa).

Positions 135–136 (GP) match the Gly-cisPro motif, important for rejection of L-amino acids motif.

The protein belongs to the DTD family. As to quaternary structure, homodimer.

The protein localises to the cytoplasm. It carries out the reaction glycyl-tRNA(Ala) + H2O = tRNA(Ala) + glycine + H(+). It catalyses the reaction a D-aminoacyl-tRNA + H2O = a tRNA + a D-alpha-amino acid + H(+). Its function is as follows. An aminoacyl-tRNA editing enzyme that deacylates mischarged D-aminoacyl-tRNAs. Also deacylates mischarged glycyl-tRNA(Ala), protecting cells against glycine mischarging by AlaRS. Acts via tRNA-based rather than protein-based catalysis; rejects L-amino acids rather than detecting D-amino acids in the active site. By recycling D-aminoacyl-tRNA to D-amino acids and free tRNA molecules, this enzyme counteracts the toxicity associated with the formation of D-aminoacyl-tRNA entities in vivo and helps enforce protein L-homochirality. This chain is D-aminoacyl-tRNA deacylase, found in Mycobacterium marinum (strain ATCC BAA-535 / M).